We begin with the raw amino-acid sequence, 270 residues long: Very long chain fatty acid elongase 3 (270 aa).

An N-linked (GlcNAc...) asparagine glycan is attached at Asn-6. 2 helical membrane-spanning segments follow: residues 29 to 49 (FFEE…VLIA) and 63 to 83 (LQGP…LGAV). Residue Asn-110 is glycosylated (N-linked (GlcNAc...) asparagine). The next 5 helical transmembrane spans lie at 115-135 (FWSW…AFII), 140-160 (PLIF…SFGY), 164-184 (VPAG…MYTY), 198-218 (LPML…IVSI), and 235-255 (HLFW…HFFC). Residues 266-270 (KTKSQ) carry the Di-lysine motif motif.

The protein belongs to the ELO family. ELOVL3 subfamily. In terms of assembly, interacts with TECR. Post-translationally, N-Glycosylated. As to expression, testis.

It is found in the endoplasmic reticulum membrane. It catalyses the reaction a very-long-chain acyl-CoA + malonyl-CoA + H(+) = a very-long-chain 3-oxoacyl-CoA + CO2 + CoA. The enzyme catalyses eicosanoyl-CoA + malonyl-CoA + H(+) = 3-oxodocosanoyl-CoA + CO2 + CoA. It carries out the reaction hexadecanoyl-CoA + malonyl-CoA + H(+) = 3-oxooctadecanoyl-CoA + CO2 + CoA. The catalysed reaction is octadecanoyl-CoA + malonyl-CoA + H(+) = 3-oxoeicosanoyl-CoA + CO2 + CoA. It catalyses the reaction (9Z)-octadecenoyl-CoA + malonyl-CoA + H(+) = 3-oxo-(11Z)-eicosenoyl-CoA + CO2 + CoA. The enzyme catalyses (9Z,12Z)-octadecadienoyl-CoA + malonyl-CoA + H(+) = (11Z,14Z)-3-oxoicosa-11,14-dienoyl-CoA + CO2 + CoA. It carries out the reaction (9Z,12Z,15Z)-octadecatrienoyl-CoA + malonyl-CoA + H(+) = (11Z,14Z,17Z)-3-oxoeicosatrienoyl-CoA + CO2 + CoA. The catalysed reaction is docosanoyl-CoA + malonyl-CoA + H(+) = 3-oxotetracosanoyl-CoA + CO2 + CoA. It catalyses the reaction tetradecanoyl-CoA + malonyl-CoA + H(+) = 3-oxohexadecanoyl-CoA + CO2 + CoA. It functions in the pathway lipid metabolism; polyunsaturated fatty acid biosynthesis. Functionally, catalyzes the first and rate-limiting reaction of the four reactions that constitute the long-chain fatty acids elongation cycle. This endoplasmic reticulum-bound enzymatic process allows the addition of 2 carbons to the chain of long- and very long-chain fatty acids (VLCFAs) per cycle. Condensing enzyme that exhibits activity toward saturated and unsaturated acyl-CoA substrates with higher activity toward C18 acyl-CoAs, especially C18:0 acyl-CoAs. May participate in the production of saturated and monounsaturated VLCFAs of different chain lengths that are involved in multiple biological processes as precursors of membrane lipids and lipid mediators. The protein is Very long chain fatty acid elongase 3 of Homo sapiens (Human).